The primary structure comprises 426 residues: Pyruvate, phosphate dikinase regulatory protein, chloroplastic (426 aa).

A chloroplast-targeting transit peptide spans 1-41 (MIGCAKPLAAPLQAWARPPSPAGRRLPPSFCAPDTSPALTR). Disordered stretches follow at residues 1–76 (MIGC…HLDR) and 94–124 (AALS…DGED). Positions 94-119 (AALSSASVSAPPVIKSPRPEDAAVAA) are enriched in low complexity. 153 to 160 (HSVNAALG) serves as a coordination point for ADP.

It belongs to the pyruvate, phosphate/water dikinase regulatory protein family. PDRP subfamily. As to quaternary structure, homodimer at pH 7.5 and homotetramer at pH 8.3. Mg(2+) serves as cofactor. Leaf mesophyll-cells.

It is found in the plastid. The protein resides in the chloroplast stroma. It carries out the reaction N(tele)-phospho-L-histidyl/L-threonyl-[pyruvate, phosphate dikinase] + ADP = N(tele)-phospho-L-histidyl/O-phospho-L-threonyl-[pyruvate, phosphate dikinase] + AMP + H(+). The enzyme catalyses N(tele)-phospho-L-histidyl/O-phospho-L-threonyl-[pyruvate, phosphate dikinase] + phosphate + H(+) = N(tele)-phospho-L-histidyl/L-threonyl-[pyruvate, phosphate dikinase] + diphosphate. It participates in photosynthesis; C4 acid pathway. With respect to regulation, regulated by light/dark exposure. Its function is as follows. Bifunctional serine/threonine kinase and phosphorylase involved in the dark/light-mediated regulation of PPDK by catalyzing its phosphorylation/dephosphorylation. Dark/light-induced changes in stromal concentrations of the competing ADP and Pi substrates govern the direction of the reaction. In the dark, phosphorylates the catalytic intermediate of PPDK (PPDK-HisP), inactivating it. Light exposure induces the phosphorolysis reaction that reactivates PPDK. Phosphorylates PPDK at both Ser-528 and Thr-527. Can use ADP as a high specificity substrate and GDP as a lower affinity substrate, but has no activity with UDP. The polypeptide is Pyruvate, phosphate dikinase regulatory protein, chloroplastic (PDRP1) (Zea mays (Maize)).